Reading from the N-terminus, the 92-residue chain is Cell division topological specificity factor (92 aa).

This sequence belongs to the MinE family.

Its function is as follows. Prevents the cell division inhibition by proteins MinC and MinD at internal division sites while permitting inhibition at polar sites. This ensures cell division at the proper site by restricting the formation of a division septum at the midpoint of the long axis of the cell. The chain is Cell division topological specificity factor from Symbiobacterium thermophilum (strain DSM 24528 / JCM 14929 / IAM 14863 / T).